The following is a 129-amino-acid chain: Small ribosomal subunit protein uS11 (129 aa).

It belongs to the universal ribosomal protein uS11 family. In terms of assembly, part of the 30S ribosomal subunit. Interacts with proteins S7 and S18. Binds to IF-3.

Its function is as follows. Located on the platform of the 30S subunit, it bridges several disparate RNA helices of the 16S rRNA. Forms part of the Shine-Dalgarno cleft in the 70S ribosome. This Idiomarina loihiensis (strain ATCC BAA-735 / DSM 15497 / L2-TR) protein is Small ribosomal subunit protein uS11.